The following is a 104-amino-acid chain: Nucleoid-associated protein Ccon26_18480 (104 aa).

Positions 16–34 (DVQKQAKQMEEESKNKEFG) are enriched in basic and acidic residues. Residues 16–38 (DVQKQAKQMEEESKNKEFGAKSG) form a disordered region.

Belongs to the YbaB/EbfC family. As to quaternary structure, homodimer.

The protein resides in the cytoplasm. It is found in the nucleoid. In terms of biological role, binds to DNA and alters its conformation. May be involved in regulation of gene expression, nucleoid organization and DNA protection. The protein is Nucleoid-associated protein Ccon26_18480 of Campylobacter concisus (strain 13826).